The sequence spans 297 residues: MNLNPFWSMSTNTGRKRSDGEEQSGEQQQQQRASPARPSFGKKQLPSIPKNALPITKPASPAATAQLANGTHASYGPFYLEYSLLAEFTLVIKQKLPGIYVQPSYKSALMWFGVIFIRHGLYQDGVFKFTVYIPDNYPDGECPRVVFDIPVFHPLVDPVSGELDVRRAFTKWRRNHNHIWQVLMYARTVFYKINTMEPLNPEAAVLYDKDVQLFKSKVVDSVKLCNSHLFDQPKMDDPYAISFSSWNPAIHDDAKERMFTHKRRPEDHHKGLQVSGLSWVKPGSTQPFSKDDNPPQN.

Over residues 1–13 (MNLNPFWSMSTNT) the composition is skewed to polar residues. Positions 1–45 (MNLNPFWSMSTNTGRKRSDGEEQSGEQQQQQRASPARPSFGKKQL) are disordered. Low complexity predominate over residues 25–39 (GEQQQQQRASPARPS). Positions 79–227 (YLEYSLLAEF…VVDSVKLCNS (149 aa)) constitute a UBC core domain. Residues 262–297 (KRRPEDHHKGLQVSGLSWVKPGSTQPFSKDDNPPQN) form a disordered region.

This sequence belongs to the ubiquitin-conjugating enzyme family. FTS subfamily.

It localises to the cytoplasm. Its subcellular location is the cell membrane. Functionally, may function to promote vesicle trafficking and/or fusion. May also regulate apoptosis. The sequence is that of AKT-interacting protein (aktip) from Salmo salar (Atlantic salmon).